Reading from the N-terminus, the 148-residue chain is SPbeta prophage-derived uncharacterized protein YomK (148 aa).

Helical transmembrane passes span 72–92 (WGIG…LFGV) and 104–124 (NALI…RNII).

It localises to the cell membrane. The polypeptide is SPbeta prophage-derived uncharacterized protein YomK (yomK) (Bacillus subtilis (strain 168)).